Here is a 145-residue protein sequence, read N- to C-terminus: D-aminoacyl-tRNA deacylase (145 aa).

The Gly-cisPro motif, important for rejection of L-amino acids motif lies at Gly-137–Pro-138.

It belongs to the DTD family. In terms of assembly, homodimer.

It localises to the cytoplasm. It catalyses the reaction glycyl-tRNA(Ala) + H2O = tRNA(Ala) + glycine + H(+). The catalysed reaction is a D-aminoacyl-tRNA + H2O = a tRNA + a D-alpha-amino acid + H(+). Functionally, an aminoacyl-tRNA editing enzyme that deacylates mischarged D-aminoacyl-tRNAs. Also deacylates mischarged glycyl-tRNA(Ala), protecting cells against glycine mischarging by AlaRS. Acts via tRNA-based rather than protein-based catalysis; rejects L-amino acids rather than detecting D-amino acids in the active site. By recycling D-aminoacyl-tRNA to D-amino acids and free tRNA molecules, this enzyme counteracts the toxicity associated with the formation of D-aminoacyl-tRNA entities in vivo and helps enforce protein L-homochirality. The protein is D-aminoacyl-tRNA deacylase of Alteromonas mediterranea (strain DSM 17117 / CIP 110805 / LMG 28347 / Deep ecotype).